We begin with the raw amino-acid sequence, 254 residues long: Undecaprenyl-diphosphatase 3 (254 aa).

Transmembrane regions (helical) follow at residues 8 to 28 (TEFL…LIGF), 33 to 53 (AKVF…VIFW), 74 to 94 (LHII…HSAI), 97 to 117 (VLFG…LMIV), 133 to 153 (ITYK…WPGF), 174 to 194 (AEYT…LDLI), 207 to 227 (LFAT…VSFL), and 233 to 253 (VKLT…YFFI).

It belongs to the UppP family.

It is found in the cell membrane. The enzyme catalyses di-trans,octa-cis-undecaprenyl diphosphate + H2O = di-trans,octa-cis-undecaprenyl phosphate + phosphate + H(+). Catalyzes the dephosphorylation of undecaprenyl diphosphate (UPP). Confers resistance to bacitracin. The protein is Undecaprenyl-diphosphatase 3 of Bacillus thuringiensis (strain Al Hakam).